Here is a 266-residue protein sequence, read N- to C-terminus: Glutamate racemase (266 aa).

Residues 9-10 (DS) and 41-42 (YG) contribute to the substrate site. The active-site Proton donor/acceptor is the cysteine 72. Residue 73–74 (NT) participates in substrate binding. Cysteine 184 (proton donor/acceptor) is an active-site residue. Position 185–186 (185–186 (TH)) interacts with substrate.

The protein belongs to the aspartate/glutamate racemases family.

It catalyses the reaction L-glutamate = D-glutamate. Its pathway is cell wall biogenesis; peptidoglycan biosynthesis. Functionally, provides the (R)-glutamate required for cell wall biosynthesis. This is Glutamate racemase from Staphylococcus aureus (strain bovine RF122 / ET3-1).